Reading from the N-terminus, the 275-residue chain is Large ribosomal subunit protein uL2c (275 aa).

A disordered region spans residues 225–256 (AMNAVDHPHGGGEGRSPIGRSQPSTPWGRPAL).

The protein belongs to the universal ribosomal protein uL2 family. In terms of assembly, part of the 50S ribosomal subunit.

The protein localises to the plastid. The protein resides in the chloroplast. The polypeptide is Large ribosomal subunit protein uL2c (rpl2) (Cyanidium caldarium (Red alga)).